Reading from the N-terminus, the 192-residue chain is NADH-quinone oxidoreductase subunit B 1 (192 aa).

The [4Fe-4S] cluster site is built by Cys71, Cys72, Cys136, and Cys166.

The protein belongs to the complex I 20 kDa subunit family. NDH-1 is composed of 14 different subunits. Subunits NuoB, C, D, E, F, and G constitute the peripheral sector of the complex. It depends on [4Fe-4S] cluster as a cofactor.

The protein localises to the cell inner membrane. It catalyses the reaction a quinone + NADH + 5 H(+)(in) = a quinol + NAD(+) + 4 H(+)(out). Functionally, NDH-1 shuttles electrons from NADH, via FMN and iron-sulfur (Fe-S) centers, to quinones in the respiratory chain. The immediate electron acceptor for the enzyme in this species is believed to be ubiquinone. Couples the redox reaction to proton translocation (for every two electrons transferred, four hydrogen ions are translocated across the cytoplasmic membrane), and thus conserves the redox energy in a proton gradient. This is NADH-quinone oxidoreductase subunit B 1 from Rhizobium meliloti (strain 1021) (Ensifer meliloti).